The chain runs to 363 residues: Zinc phosphodiesterase ELAC protein 1 (363 aa).

The Zn(2+) site is built by histidine 62, histidine 64, aspartate 66, histidine 67, histidine 182, aspartate 253, and histidine 313. Catalysis depends on aspartate 66, which acts as the Proton acceptor.

It belongs to the RNase Z family. In terms of assembly, homodimer. It depends on Zn(2+) as a cofactor. As to expression, widely expressed. Expressed in heart, brain, placenta, lung, liver, skeletal muscle, kidney and pancreas.

It localises to the cytoplasm. The protein resides in the cytosol. The protein localises to the nucleus. The catalysed reaction is Endonucleolytic cleavage of RNA, removing extra 3' nucleotides from tRNA precursor, generating 3' termini of tRNAs. A 3'-hydroxy group is left at the tRNA terminus and a 5'-phosphoryl group is left at the trailer molecule.. Functionally, zinc phosphodiesterase, which displays some tRNA 3'-processing endonuclease activity. Specifically involved in tRNA repair: acts downstream of the ribosome-associated quality control (RQC) pathway by removing a 2',3'-cyclic phosphate from tRNAs following cleavage by ANKZF1. tRNAs are then processed by TRNT1. This chain is Zinc phosphodiesterase ELAC protein 1, found in Homo sapiens (Human).